The sequence spans 176 residues: Lipoprotein signal peptidase (176 aa).

Transmembrane regions (helical) follow at residues leucine 10–leucine 30, valine 48–phenylalanine 68, tyrosine 78–methionine 98, and methionine 102–aspartate 122. Catalysis depends on residues aspartate 131 and aspartate 149. A helical transmembrane segment spans residues histidine 141 to isoleucine 161.

Belongs to the peptidase A8 family.

It is found in the cell inner membrane. It carries out the reaction Release of signal peptides from bacterial membrane prolipoproteins. Hydrolyzes -Xaa-Yaa-Zaa-|-(S,diacylglyceryl)Cys-, in which Xaa is hydrophobic (preferably Leu), and Yaa (Ala or Ser) and Zaa (Gly or Ala) have small, neutral side chains.. It functions in the pathway protein modification; lipoprotein biosynthesis (signal peptide cleavage). Its function is as follows. This protein specifically catalyzes the removal of signal peptides from prolipoproteins. The protein is Lipoprotein signal peptidase of Acinetobacter baumannii (strain SDF).